We begin with the raw amino-acid sequence, 2439 residues long: Protein roller-3 (2439 aa).

The N-terminal stretch at 1-26 (MLDFPRFSLFLFLLFSSFLFSSFVHA) is a signal peptide. At 27-1851 (ATVFSSSLKT…EEEKGGILPY (1825 aa)) the chain is on the extracellular side. N-linked (GlcNAc...) asparagine glycans are attached at residues N64, N182, N334, N394, N496, N533, N657, N766, N868, N1003, N1036, N1090, and N1261. Residues 618–720 (KPRIVAVSSI…STSNTALPDL (103 aa)) enclose the Fibronectin type-III 1 domain. Fibronectin type-III domains follow at residues 1403-1503 (SKGI…TGFG), 1507-1628 (APRD…TLDV), 1629-1732 (PGTL…IQQA), and 1738-1843 (VPTA…EKEE). N-linked (GlcNAc...) asparagine glycosylation is found at N1567, N1636, N1677, and N1779. The helical transmembrane segment at 1852–1872 (FLGISIILLLAAMILVGCFWL) threads the bilayer. Residues 1873-2439 (KSRRRQQMKK…GGTCRSVSQV (567 aa)) are Cytoplasmic-facing. The Protein kinase domain maps to 1928–2199 (VEIVRHISDC…ATILKIFETC (272 aa)). ATP is bound by residues 1934-1942 (ISDCSYGSV) and K1963. 3 disordered regions span residues 2214–2277 (NEGS…RPAT), 2315–2348 (SQRP…NRTN), and 2412–2439 (HLRA…VSQV). 3 stretches are compositionally biased toward polar residues: residues 2216 to 2233 (GSDN…SSRE), 2334 to 2347 (ATSS…SNRT), and 2420 to 2439 (PPTR…VSQV).

It is found in the membrane. Involved in larval development and locomotion. The protein is Protein roller-3 of Caenorhabditis briggsae.